The primary structure comprises 276 residues: GPN-loop GTPase 3 (276 aa).

13–18 (SSGKST) contacts GTP. Positions 70–72 (GPN) match the Gly-Pro-Asn (GPN)-loop; involved in dimer interface motif. 173-176 (SKMD) is a binding site for GTP. The disordered stretch occupies residues 257–276 (EDQEPKDPDRFEADDLEDDE). Residues 259-269 (QEPKDPDRFEA) show a composition bias toward basic and acidic residues.

Belongs to the GPN-loop GTPase family. Heterodimers with gpn1 or gpn2. Binds to RNA polymerase II (RNAPII).

It localises to the cytoplasm. The protein resides in the nucleus. Functionally, small GTPase required for proper nuclear import of RNA polymerase II and III (RNAPII and RNAPIII). May act at an RNAP assembly step prior to nuclear import. This Schizosaccharomyces pombe (strain 972 / ATCC 24843) (Fission yeast) protein is GPN-loop GTPase 3.